A 245-amino-acid chain; its full sequence is Glutathione S-transferase T1 (245 aa).

Residues 2 to 83 (MKLKVYADRM…YLSSAFPSVA (82 aa)) form the GST N-terminal domain. Glutathione is bound by residues 12-13 (SQ), 41-42 (QL), 54-55 (KV), and 67-68 (ES). One can recognise a GST C-terminal domain in the interval 90-233 (DLSKRAKIHS…KEGFQKRREM (144 aa)). The Microbody targeting signal motif lies at 243–245 (SKI).

The protein belongs to the GST superfamily. Theta family.

Its subcellular location is the nucleus. The protein resides in the peroxisome. The enzyme catalyses RX + glutathione = an S-substituted glutathione + a halide anion + H(+). Its function is as follows. In vitro, possesses glutathione S-transferase activity toward 1-chloro-2,4-dinitrobenzene (CDNB) and p-nitrobenzyl chloride (pNBC), and glutathione peroxidase activity toward cumene hydroperoxide and linoleic acid-13-hydroperoxide. May be involved in the conjugation of reduced glutathione to a wide number of exogenous and endogenous hydrophobic electrophiles and have a detoxification role against certain herbicides. This chain is Glutathione S-transferase T1 (GSTT1), found in Arabidopsis thaliana (Mouse-ear cress).